The primary structure comprises 60 residues: Snake venom metalloproteinase bothrojaractivase (60 aa).

In terms of domain architecture, Peptidase M12B spans 1–60 (RYIELAVVADHGMFTKYRVHELVNTVNGFFRSKQDLIKVQKDKTLTSFGEWRERDLLPRI). E4 lines the Ca(2+) pocket.

Belongs to the venom metalloproteinase (M12B) family. P-I subfamily. In terms of assembly, monomer. Requires Zn(2+) as cofactor. Expressed by the venom gland.

Its subcellular location is the secreted. With respect to regulation, completely inhibited by EDTA and EGTA. Partially inhibited by serine proteinase inhibitors PMSF and benzamidine. Not inhibited by cysteine proteinase inhibitors mercury ions and E-64. Is active without cofactors, although the presence of low concentrations of calcium and zinc ions enhanced its ability to convert prothrombin (F2) into active thrombin. Its function is as follows. Prothrombin (F2) activator that is cofactor-independent. Also has fibrinolytic and fibrinogenolytic activity. It degrades the Aalpha-chain and more slowly the Bbeta-chain of fibrin and fibrinogen, while the gamma-chain is only partially and slowly affected. A dose-dependent procoagulant activity is shown in human plasma. In Bothrops jararaca (Jararaca), this protein is Snake venom metalloproteinase bothrojaractivase.